A 369-amino-acid chain; its full sequence is Cystathionine gamma-synthase (369 aa).

An N6-(pyridoxal phosphate)lysine modification is found at Lys-200.

Belongs to the trans-sulfuration enzymes family. As to quaternary structure, homotetramer. Pyridoxal 5'-phosphate serves as cofactor.

The protein localises to the cytoplasm. The enzyme catalyses O-succinyl-L-homoserine + L-cysteine = L,L-cystathionine + succinate + H(+). Catalyzes the formation of L-cystathionine from O-succinyl-L-homoserine (OSHS) and L-cysteine, via a gamma-replacement reaction. In the absence of thiol, catalyzes gamma-elimination to form 2-oxobutanoate, succinate and ammonia. The protein is Cystathionine gamma-synthase (metB) of Haemophilus influenzae (strain ATCC 51907 / DSM 11121 / KW20 / Rd).